Reading from the N-terminus, the 563-residue chain is Cystathionine gamma-synthase 1, chloroplastic (563 aa).

A chloroplast-targeting transit peptide spans 1-68 (MAVSSFQCPT…SRILRFPPNF (68 aa)). Tyr226, Arg228, Gly256, Met257, Tyr281, Ser376, and Thr378 together coordinate pyridoxal 5'-phosphate. Lys379 is modified (N6-(pyridoxal phosphate)lysine).

Belongs to the trans-sulfuration enzymes family. The cofactor is pyridoxal 5'-phosphate.

It localises to the plastid. It is found in the chloroplast. The catalysed reaction is O-phospho-L-homoserine + L-cysteine = L,L-cystathionine + phosphate. The enzyme catalyses O-succinyl-L-homoserine + L-cysteine = L,L-cystathionine + succinate + H(+). It participates in amino-acid biosynthesis; L-methionine biosynthesis via de novo pathway; L-cystathionine from O-succinyl-L-homoserine: step 1/1. Inhibited by propargylglycine. Catalyzes the first committed step of methionine (Met) biosynthesis. Catalyzes the formation of L-cystathionine from homoserine esters and L-cysteine, via a gamma-replacement reaction. Substrate preference for cystathionine synthesis is O-phospho-L-homoserine (OPH) &gt; O(4)-succinyl-L-homoserine (OSH) &gt;&gt; O-acetyl-L-homoserine (OAH). Is able, at extremely low rate, to catalyze a gamma-elimination of OPH in the absence of cysteine to produce inorganic phosphate (Pi), 2-oxobutanoate and ammonia. The protein is Cystathionine gamma-synthase 1, chloroplastic of Arabidopsis thaliana (Mouse-ear cress).